We begin with the raw amino-acid sequence, 207 residues long: MTGIPSIVPYALPTSRDLPANLAQWHIDPERAVLLVHDMQRYFLRPLPDALRDQVVGNAARIRQWAADNGVPVAYTAQPGSMNEEQRGLLKDFWGPGMKASPTDREVVDALAPQPGDWLLTKWRYSAFFNSDLLQRLHASGRDQLILCGVYAHVGVLISSVDAYSNDIQPFLVADAIADFSKEHHWMAMEYAASRCAMVITTDEVVL.

Asp38 acts as the Proton donor in catalysis. Substrate-binding positions include Gln78, Arg87, Lys122, and Tyr151 to Gly155.

It belongs to the isochorismatase family. As to quaternary structure, homodimer.

The enzyme catalyses (2S)-2-amino-4-deoxychorismate + H2O = (5S,6S)-6-amino-5-hydroxycyclohexa-1,3-diene-1-carboxyate + pyruvate. It participates in antibiotic biosynthesis; phenazine biosynthesis. In terms of biological role, involved in the biosynthesis of the antibiotic phenazine, a nitrogen-containing heterocyclic molecule having important roles in virulence, competition and biological control. Catalyzes the hydrolysis of the vinyl ether functional group of 2-amino-2-deoxyisochorismate (ADIC), yielding pyruvate and trans-2,3-dihydro-3-hydroxyanthranilic acid (DHHA). This Pseudomonas fluorescens protein is Phenazine biosynthesis protein PhzD.